The following is a 290-amino-acid chain: MSDAGHVDAVCKPLGAADIRELARSAGVRPRKTFGQHFVVDPGVLRKIARYAELSSEDIALEIGPGFGSLTLVLLPLVRRLLAVEIDRVLAAVLPETIRRRCPAFADRLVVVHGDVLRLTTLPDDPTVLVANLPYNVAVPAVLRVFERFSTVTRTVIMVQREVAERLCADPGSPAYGAPSIKLRWYGRARIVGSVSADVFWPRPQVESAVVRIDRQPPPVPGVDRAAVFAVIDAAFAQRRKMLRRALSGWAGSAQAAEERILAAGLRPTDRGEALTLADFIRLAQAPPTR.

His-37, Val-39, Gly-64, Glu-85, Asp-115, and Asn-132 together coordinate S-adenosyl-L-methionine.

It belongs to the class I-like SAM-binding methyltransferase superfamily. rRNA adenine N(6)-methyltransferase family. RsmA subfamily.

It is found in the cytoplasm. It catalyses the reaction adenosine(1518)/adenosine(1519) in 16S rRNA + 4 S-adenosyl-L-methionine = N(6)-dimethyladenosine(1518)/N(6)-dimethyladenosine(1519) in 16S rRNA + 4 S-adenosyl-L-homocysteine + 4 H(+). Its function is as follows. Specifically dimethylates two adjacent adenosines (A1518 and A1519) in the loop of a conserved hairpin near the 3'-end of 16S rRNA in the 30S particle. May play a critical role in biogenesis of 30S subunits. In Acidothermus cellulolyticus (strain ATCC 43068 / DSM 8971 / 11B), this protein is Ribosomal RNA small subunit methyltransferase A.